A 73-amino-acid chain; its full sequence is Small ribosomal subunit protein bS18 (73 aa).

This sequence belongs to the bacterial ribosomal protein bS18 family. Part of the 30S ribosomal subunit. Forms a tight heterodimer with protein bS6.

Binds as a heterodimer with protein bS6 to the central domain of the 16S rRNA, where it helps stabilize the platform of the 30S subunit. This Prochlorococcus marinus (strain MIT 9313) protein is Small ribosomal subunit protein bS18.